The primary structure comprises 422 residues: Adhesin YadA (422 aa).

The N-terminal stretch at 1-25 (MTKDFKISVSAALISALFSSPYAFA) is a signal peptide. The segment at 26 to 330 (NNDEVHFTAV…KKAIRESNQY (305 aa)) is surface exposed passenger domain. The stretch at 206 to 236 (VNVAQLKKEIEKTQVNANKKSAEVLGIANNY) forms a coiled coil. Residues 331–368 (TDHKFRQLDNRLDKLDTRVDKGLASSAALNSLFQPYGV) are outer membrane translocation of the passenger domain. Transmembrane regions (beta stranded) follow at residues 369 to 379 (GKVNFTAGVGG), 383 to 394 (SQALAIGSGYRV), 401 to 407 (KAGVAYA), and 411 to 422 (DVMYNASFNIEW). A translocator domain region spans residues 369 to 422 (GKVNFTAGVGGYRSSQALAIGSGYRVNESVALKAGVAYAGSSDVMYNASFNIEW).

The protein belongs to the autotransporter-2 (AT-2) (TC 1.B.40) family. In terms of assembly, homotrimer; trimers are very stable, not disrupted by heating at 95 degrees Celsius for 10 minutes in SDS sample buffer.

The protein localises to the cell surface. It localises to the cell outer membrane. Collagen-binding outer membrane protein forming a fibrillar matrix on the bacterial cell surface and phagocytosis resistance. Promotes initial attachment and invasion of eukaryotic cells. Also protects the bacteria by being responsible for agglutination, serum resistance and complement inactivation. Gly-389 plays an important role in this protein; replacing it with increasingly large polar residues decreases expression levels and trimer stability. Residues larger than Ser (Thr, Asn or His) significantly decrease serume resistance and bacterial autoagglution without affecting adhesion to host cells or host cell cytokine production. The protein is Adhesin YadA of Yersinia enterocolitica serotype O:8 / biotype 1B (strain NCTC 13174 / 8081).